We begin with the raw amino-acid sequence, 347 residues long: Selenide, water dikinase (347 aa).

Residue Cys17 is part of the active site. ATP contacts are provided by residues Lys20 and 48 to 50 (TRD). Mg(2+) is bound at residue Asp51. ATP is bound by residues Asp68, Asp91, and 139–141 (GHS). Asp91 serves as a coordination point for Mg(2+). Mg(2+) is bound at residue Asp227.

The protein belongs to the selenophosphate synthase 1 family. Class I subfamily. Homodimer. The cofactor is Mg(2+).

The catalysed reaction is hydrogenselenide + ATP + H2O = selenophosphate + AMP + phosphate + 2 H(+). Its function is as follows. Synthesizes selenophosphate from selenide and ATP. In Escherichia coli O9:H4 (strain HS), this protein is Selenide, water dikinase.